The sequence spans 360 residues: Glycerol-1-phosphate dehydrogenase [NAD(P)+] (360 aa).

NAD(+) contacts are provided by residues 108 to 112 and 130 to 133; these read GRVID and TAAS. Aspartate 135 contributes to the substrate binding site. Residue serine 139 coordinates NAD(+). Aspartate 182 provides a ligand contact to substrate. 2 residues coordinate Zn(2+): aspartate 182 and histidine 262. Histidine 266 contacts substrate. Position 278 (histidine 278) interacts with Zn(2+).

The protein belongs to the glycerol-1-phosphate dehydrogenase family. The cofactor is Zn(2+).

The protein resides in the cytoplasm. The catalysed reaction is sn-glycerol 1-phosphate + NAD(+) = dihydroxyacetone phosphate + NADH + H(+). The enzyme catalyses sn-glycerol 1-phosphate + NADP(+) = dihydroxyacetone phosphate + NADPH + H(+). It participates in membrane lipid metabolism; glycerophospholipid metabolism. Functionally, catalyzes the NAD(P)H-dependent reduction of dihydroxyacetonephosphate (DHAP or glycerone phosphate) to glycerol 1-phosphate (G1P). The G1P thus generated is used as the glycerophosphate backbone of phospholipids in the cellular membranes of Archaea. This is Glycerol-1-phosphate dehydrogenase [NAD(P)+] from Methanocorpusculum labreanum (strain ATCC 43576 / DSM 4855 / Z).